Consider the following 667-residue polypeptide: Fatty acyl-CoA synthetase A (667 aa).

It belongs to the ATP-dependent AMP-binding enzyme family.

It is found in the endosome membrane. It catalyses the reaction a long-chain fatty acid + ATP + CoA = a long-chain fatty acyl-CoA + AMP + diphosphate. Long chain fatty acid acyl-CoA synthetases catalyze the formation of a thiester bond between a free fatty acid and coenzyme A during fatty acid metabolic process. May mediate fatty acid retrieval from the lumen of endosomes into the cytoplasm. The chain is Fatty acyl-CoA synthetase A (fcsA) from Dictyostelium discoideum (Social amoeba).